We begin with the raw amino-acid sequence, 181 residues long: Putative D-tyrosyl-tRNA(Tyr) deacylase 2 (181 aa).

Belongs to the DTD family. Highly divergent. Homodimer.

The protein resides in the cytoplasm. Its function is as follows. May hydrolyze D-tyrosyl-tRNA(Tyr) into D-tyrosine and free tRNA(Tyr). Could be a defense mechanism against a harmful effect of D-tyrosine. In Leishmania major, this protein is Putative D-tyrosyl-tRNA(Tyr) deacylase 2.